The primary structure comprises 505 residues: ATP synthase subunit alpha, chloroplastic (505 aa).

172-179 (GDRQTGKT) provides a ligand contact to ATP.

This sequence belongs to the ATPase alpha/beta chains family. As to quaternary structure, F-type ATPases have 2 components, CF(1) - the catalytic core - and CF(0) - the membrane proton channel. CF(1) has five subunits: alpha(3), beta(3), gamma(1), delta(1), epsilon(1). CF(0) has four main subunits: a, b, b' and c.

Its subcellular location is the plastid. It is found in the chloroplast thylakoid membrane. The enzyme catalyses ATP + H2O + 4 H(+)(in) = ADP + phosphate + 5 H(+)(out). In terms of biological role, produces ATP from ADP in the presence of a proton gradient across the membrane. The alpha chain is a regulatory subunit. This is ATP synthase subunit alpha, chloroplastic from Antithamnion sp. (Red alga).